The following is a 344-amino-acid chain: RNA-binding protein squid (344 aa).

Residues 1 to 55 (MAENKQVDTEINGEDFTKDVTADGPGSENGDAGAAGSTNGSSDNQSAASGQRDDD) are disordered. The segment covering 36–49 (GSTNGSSDNQSAAS) has biased composition (polar residues). RRM domains are found at residues 56-138 (RKLF…HGKI) and 136-213 (GKIF…RATP). Phosphoserine is present on serine 148. 2 disordered regions span residues 214–238 (KPEN…RGGY) and 301–344 (GGGG…HQPY). The interval 215–254 (PENQMMGGMRGGPRGGMRGGRGGYGGRGGYNNQWDGQGSY) is M9-like motif. 2 stretches are compositionally biased toward gly residues: residues 222–238 (GMRG…RGGY) and 301–337 (GGGG…GGGR). The interval 300–338 (GGGGGGNMGGGRGGPRGGGGPKGGGGFNGGKQRGGGGRQ) is M9 motif.

As to quaternary structure, interacts with bru1/Bruno; the interaction is direct but weak, and may play a role in regulation of grk mRNA localization and translation. In terms of assembly, interacts (probably via M9 and M9-like motifs) with Tnpo/Transportin; the interaction is direct and is involved in nuclear localization. Interacts with fs(1)K10 (via N-terminus); may be involved in localization of sqd in the oocyte during oogenesis. Interacts (via C-terminus) with Hrb27C; the interaction is RNA dependent. Does not interact with Tnpo/Transportin. Interacts with fs(1)K10 (via N-terminus); may be involved in localization of sqd in the oocyte during oogenesis. As to quaternary structure, interacts (probably via M9-like motif) with Tnpo/Transportin; the interaction is direct and is involved in nuclear localization. Interacts with fs(1)K10 (via N-terminus); may be involved in localization of sqd in the oocyte during oogenesis.

The protein resides in the nucleus. Its subcellular location is the cytoplasm. In terms of biological role, component of ribonucleosomes. Could be needed to organize a concentration gradient of a dorsalizing morphogen (Dm) originating in the germinal vesicle. At least one of the isoforms is essential in somatic tissues. Interacts with grk mRNA (via 3' UTR) and involved in its localization to the dorsal anterior region of the oocyte during dorsal-ventral axis determination; may function as a ribonuclear protein complex together with otu and Hrb27C. Required for polytene chromosome dispersal in nurse cells during oogenesis; nuclear isoforms play a greater role in this than cytoplasmic isoforms. Required nonredundantly with isoform A/sqdA for dorsoventral pattern determination during oogenesis. May be important in somatic tissues. Its function is as follows. Required nonredundantly with isoform B/SqdS for dorsoventral pattern determination during oogenesis. Functionally, may lack a role in dorsoventral pattern determination during oogenesis. May be important in somatic tissues. The sequence is that of RNA-binding protein squid from Drosophila melanogaster (Fruit fly).